The primary structure comprises 197 residues: Na(+)-translocating NADH-quinone reductase subunit E (197 aa).

A run of 6 helical transmembrane segments spans residues 11-31 (SVFI…FLAV), 35-55 (VSTA…SVPA), 76-96 (FLKF…LEMF), 108-128 (LGIY…VSFM), 139-159 (VVYG…LAGI), and 175-195 (LGIT…FSGI).

The protein belongs to the NqrDE/RnfAE family. As to quaternary structure, composed of six subunits; NqrA, NqrB, NqrC, NqrD, NqrE and NqrF.

Its subcellular location is the cell inner membrane. It carries out the reaction a ubiquinone + n Na(+)(in) + NADH + H(+) = a ubiquinol + n Na(+)(out) + NAD(+). In terms of biological role, NQR complex catalyzes the reduction of ubiquinone-1 to ubiquinol by two successive reactions, coupled with the transport of Na(+) ions from the cytoplasm to the periplasm. NqrA to NqrE are probably involved in the second step, the conversion of ubisemiquinone to ubiquinol. The chain is Na(+)-translocating NADH-quinone reductase subunit E from Neisseria gonorrhoeae (strain ATCC 700825 / FA 1090).